We begin with the raw amino-acid sequence, 385 residues long: V-type proton ATPase subunit C (385 aa).

This sequence belongs to the V-ATPase C subunit family. As to quaternary structure, V-ATPase is a heteromultimeric enzyme made up of two complexes: the ATP-hydrolytic V1 complex and the proton translocation V0 complex. The V1 complex consists of three catalytic AB heterodimers that form a heterohexamer, three peripheral stalks each consisting of EG heterodimers, one central rotor including subunits D and F, and the regulatory subunits C and H. The proton translocation complex V0 consists of the proton transport subunit a, a ring of proteolipid subunits c9c'', rotary subunit d, subunits e and f, and the accessory subunits vah-19/Ac45 and vah-20/PRR. Interacts with V-type proton ATPase subunits a1 unc-32, a2 vha-5 and a3 vha-6.

Its subcellular location is the cytoplasm. The protein localises to the membrane. Subunit of the V1 complex of vacuolar(H+)-ATPase (V-ATPase), a multisubunit enzyme composed of a peripheral complex (V1) that hydrolyzes ATP and a membrane integral complex (V0) that translocates protons. V-ATPase is responsible for acidifying and maintaining the pH of intracellular compartments and in some cell types, is targeted to the plasma membrane, where it is responsible for acidifying the extracellular environment. Subunit C is necessary for the assembly of the catalytic sector of the enzyme and is likely to have a specific function in its catalytic activity. Has roles in embryogenesis and ovulation. The polypeptide is V-type proton ATPase subunit C (Caenorhabditis briggsae).